Here is a 278-residue protein sequence, read N- to C-terminus: DNA adenine methylase (278 aa).

S-adenosyl-L-methionine contacts are provided by tryptophan 10, lysine 14, aspartate 54, and aspartate 181.

Belongs to the N(4)/N(6)-methyltransferase family.

The enzyme catalyses a 2'-deoxyadenosine in DNA + S-adenosyl-L-methionine = an N(6)-methyl-2'-deoxyadenosine in DNA + S-adenosyl-L-homocysteine + H(+). Functionally, an alpha subtype methylase, recognizes the double-stranded sequence 5'-GATC-3' and methylates A-2. May be involved in methyl-directed DNA mismatch repair, initiation of chromosome replication and gene expression. The protein is DNA adenine methylase (dam) of Escherichia coli O157:H7.